Here is a 195-residue protein sequence, read N- to C-terminus: Thymidylate kinase (195 aa).

7-14 serves as a coordination point for ATP; the sequence is GIDGVGKS.

Belongs to the thymidylate kinase family.

The catalysed reaction is dTMP + ATP = dTDP + ADP. Its function is as follows. Phosphorylation of dTMP to form dTDP in both de novo and salvage pathways of dTTP synthesis. This chain is Thymidylate kinase, found in Campylobacter concisus (strain 13826).